Here is a 690-residue protein sequence, read N- to C-terminus: Translation initiation factor IF-2 (690 aa).

Residues 178–346 enclose the tr-type G domain; the sequence is PRPPVVTVMG…MILLVAEMNE (169 aa). The G1 stretch occupies residues 187-194; the sequence is GHVDHGKT. 187-194 provides a ligand contact to GTP; sequence GHVDHGKT. Positions 212-216 are G2; that stretch reads GITQS. Residues 233 to 236 are G3; that stretch reads DTPG. GTP-binding positions include 233–237 and 287–290; these read DTPGH and NKID. Residues 287 to 290 are G4; that stretch reads NKID. Residues 324–326 are G5; sequence SAR.

The protein belongs to the TRAFAC class translation factor GTPase superfamily. Classic translation factor GTPase family. IF-2 subfamily.

It is found in the cytoplasm. One of the essential components for the initiation of protein synthesis. Protects formylmethionyl-tRNA from spontaneous hydrolysis and promotes its binding to the 30S ribosomal subunits. Also involved in the hydrolysis of GTP during the formation of the 70S ribosomal complex. This chain is Translation initiation factor IF-2, found in Thermotoga sp. (strain RQ2).